Reading from the N-terminus, the 484-residue chain is Glutamyl-tRNA(Gln) amidotransferase subunit A (484 aa).

Catalysis depends on charge relay system residues Lys77 and Ser152. Ser176 (acyl-ester intermediate) is an active-site residue.

Belongs to the amidase family. GatA subfamily. Heterotrimer of A, B and C subunits.

It carries out the reaction L-glutamyl-tRNA(Gln) + L-glutamine + ATP + H2O = L-glutaminyl-tRNA(Gln) + L-glutamate + ADP + phosphate + H(+). Allows the formation of correctly charged Gln-tRNA(Gln) through the transamidation of misacylated Glu-tRNA(Gln) in organisms which lack glutaminyl-tRNA synthetase. The reaction takes place in the presence of glutamine and ATP through an activated gamma-phospho-Glu-tRNA(Gln). This is Glutamyl-tRNA(Gln) amidotransferase subunit A from Pseudomonas aeruginosa (strain LESB58).